A 217-amino-acid chain; its full sequence is 3,4-dihydroxy-2-butanone 4-phosphate synthase (217 aa).

Residues 37 to 38 (RE), aspartate 42, 150 to 154 (RRGHT), and glutamate 174 contribute to the D-ribulose 5-phosphate site. Glutamate 38 is a binding site for Mg(2+). Histidine 153 serves as a coordination point for Mg(2+).

It belongs to the DHBP synthase family. Homodimer. Mg(2+) serves as cofactor. It depends on Mn(2+) as a cofactor.

It carries out the reaction D-ribulose 5-phosphate = (2S)-2-hydroxy-3-oxobutyl phosphate + formate + H(+). It functions in the pathway cofactor biosynthesis; riboflavin biosynthesis; 2-hydroxy-3-oxobutyl phosphate from D-ribulose 5-phosphate: step 1/1. In terms of biological role, catalyzes the conversion of D-ribulose 5-phosphate to formate and 3,4-dihydroxy-2-butanone 4-phosphate. This Syntrophotalea carbinolica (strain DSM 2380 / NBRC 103641 / GraBd1) (Pelobacter carbinolicus) protein is 3,4-dihydroxy-2-butanone 4-phosphate synthase.